A 212-amino-acid chain; its full sequence is Pyridoxine/pyridoxamine 5'-phosphate oxidase (212 aa).

Residues 8 to 11 (RRSY) and Lys66 each bind substrate. FMN contacts are provided by residues 61–66 (RIVLLK), 76–77 (FT), Arg82, Lys83, and Gln105. The substrate site is built by Tyr123, Arg127, and Ser131. FMN contacts are provided by residues 140 to 141 (QS) and Trp184. Residue 190-192 (RLH) participates in substrate binding. Position 194 (Arg194) interacts with FMN.

It belongs to the pyridoxamine 5'-phosphate oxidase family. Homodimer. FMN is required as a cofactor.

The catalysed reaction is pyridoxamine 5'-phosphate + O2 + H2O = pyridoxal 5'-phosphate + H2O2 + NH4(+). The enzyme catalyses pyridoxine 5'-phosphate + O2 = pyridoxal 5'-phosphate + H2O2. Its pathway is cofactor metabolism; pyridoxal 5'-phosphate salvage; pyridoxal 5'-phosphate from pyridoxamine 5'-phosphate: step 1/1. It functions in the pathway cofactor metabolism; pyridoxal 5'-phosphate salvage; pyridoxal 5'-phosphate from pyridoxine 5'-phosphate: step 1/1. Its function is as follows. Catalyzes the oxidation of either pyridoxine 5'-phosphate (PNP) or pyridoxamine 5'-phosphate (PMP) into pyridoxal 5'-phosphate (PLP). This is Pyridoxine/pyridoxamine 5'-phosphate oxidase from Cupriavidus necator (strain ATCC 17699 / DSM 428 / KCTC 22496 / NCIMB 10442 / H16 / Stanier 337) (Ralstonia eutropha).